The primary structure comprises 88 residues: FXYD domain-containing ion transport regulator 3 (88 aa).

Positions 1–20 (MQEFALSLLVLLAGLPTLDA) are cleaved as a signal peptide. At 21 to 38 (NDPEDKDSPFYYDWHSLR) the chain is on the extracellular side. A helical transmembrane segment spans residues 39–59 (VGGLICAGILCALGIIVLMSG). At 60-88 (KCKCKFSQKPSHRPGDGPPLITPGSAHNC) the chain is on the cytoplasmic side. The segment at 66 to 88 (SQKPSHRPGDGPPLITPGSAHNC) is disordered.

This sequence belongs to the FXYD family. As to quaternary structure, regulatory subunit of the sodium/potassium-transporting ATPase which is composed of a catalytic alpha subunit, a non-catalytic beta subunit and an additional regulatory subunit. Interacts with catalytic alpha subunit ATP1A1. Also interacts with non-catalytic beta subunit ATP1B1. Interacts with the alpha1-beta1, alpha2-beta1 and alpha3-beta1 NKA isozymes. Glutathionylated.

The protein localises to the cell membrane. In terms of biological role, associates with and regulates the activity of the sodium/potassium-transporting ATPase (NKA) which transports Na(+) out of the cell and K(+) into the cell. Reduces glutathionylation of the NKA beta-1 subunit ATP1B1, thus reversing glutathionylation-mediated inhibition of ATP1B1. Induces a hyperpolarization-activated chloride current when expressed in Xenopus oocytes. The sequence is that of FXYD domain-containing ion transport regulator 3 (Fxyd3) from Rattus norvegicus (Rat).